Here is a 327-residue protein sequence, read N- to C-terminus: tRNA dimethylallyltransferase (327 aa).

14 to 21 (GPTASGKT) serves as a coordination point for ATP. 16–21 (TASGKT) provides a ligand contact to substrate. Interaction with substrate tRNA stretches follow at residues 39 to 42 (DSAL) and 163 to 167 (QRIQR).

It belongs to the IPP transferase family. Monomer. The cofactor is Mg(2+).

The enzyme catalyses adenosine(37) in tRNA + dimethylallyl diphosphate = N(6)-dimethylallyladenosine(37) in tRNA + diphosphate. In terms of biological role, catalyzes the transfer of a dimethylallyl group onto the adenine at position 37 in tRNAs that read codons beginning with uridine, leading to the formation of N6-(dimethylallyl)adenosine (i(6)A). The chain is tRNA dimethylallyltransferase from Xanthomonas oryzae pv. oryzae (strain KACC10331 / KXO85).